We begin with the raw amino-acid sequence, 294 residues long: Ethanolamine ammonia-lyase small subunit (294 aa).

Residues V207 and E228 each contribute to the adenosylcob(III)alamin site.

It belongs to the EutC family. As to quaternary structure, the basic unit is a heterodimer which dimerizes to form tetramers. The heterotetramers trimerize; 6 large subunits form a core ring with 6 small subunits projecting outwards. It depends on adenosylcob(III)alamin as a cofactor.

The protein localises to the bacterial microcompartment. It carries out the reaction ethanolamine = acetaldehyde + NH4(+). It functions in the pathway amine and polyamine degradation; ethanolamine degradation. In terms of biological role, catalyzes the deamination of various vicinal amino-alcohols to oxo compounds. Allows this organism to utilize ethanolamine as the sole source of nitrogen and carbon in the presence of external vitamin B12. The chain is Ethanolamine ammonia-lyase small subunit from Clostridium tetani (strain Massachusetts / E88).